The following is an 89-amino-acid chain: Small ribosomal subunit protein uS15 (89 aa).

It belongs to the universal ribosomal protein uS15 family. In terms of assembly, part of the 30S ribosomal subunit. Forms a bridge to the 50S subunit in the 70S ribosome, contacting the 23S rRNA.

One of the primary rRNA binding proteins, it binds directly to 16S rRNA where it helps nucleate assembly of the platform of the 30S subunit by binding and bridging several RNA helices of the 16S rRNA. Functionally, forms an intersubunit bridge (bridge B4) with the 23S rRNA of the 50S subunit in the ribosome. The protein is Small ribosomal subunit protein uS15 of Streptococcus pyogenes serotype M1.